The primary structure comprises 228 residues: Phosphatidate cytidylyltransferase (228 aa).

Helical transmembrane passes span 31–51 (FVVAILWFKTLFYILMILVGL), 65–85 (IHYLLIGFIIIPIPISLLIFL), 93–113 (LVIMLYFCIIWSVDTFAMIGG), 131–151 (WTGLIIGTISAGLIAVLVSLI), 165–185 (IYLFIISCILALIAQSSDLFI), and 206–226 (GVLDRFDSIILTAPVFFGINI).

This sequence belongs to the CDS family.

It is found in the cell membrane. The enzyme catalyses a 1,2-diacyl-sn-glycero-3-phosphate + CTP + H(+) = a CDP-1,2-diacyl-sn-glycerol + diphosphate. It functions in the pathway phospholipid metabolism; CDP-diacylglycerol biosynthesis; CDP-diacylglycerol from sn-glycerol 3-phosphate: step 3/3. The polypeptide is Phosphatidate cytidylyltransferase (cdsA) (Rickettsia typhi (strain ATCC VR-144 / Wilmington)).